A 137-amino-acid chain; its full sequence is Large ribosomal subunit protein uL16 (137 aa).

The protein belongs to the universal ribosomal protein uL16 family. As to quaternary structure, part of the 50S ribosomal subunit.

Binds 23S rRNA and is also seen to make contacts with the A and possibly P site tRNAs. The protein is Large ribosomal subunit protein uL16 of Streptococcus pyogenes serotype M1.